A 470-amino-acid polypeptide reads, in one-letter code: Monocarboxylate transporter 4 (470 aa).

The Cytoplasmic segment spans residues 1 to 17 (MGGAVVDEGPTGIKAPD). A helical membrane pass occupies residues 18–38 (GGWGWAVLFGCFIITGFSYAF). Over 39 to 61 (PKAVSVFFKELMHEFGIGYSDTA) the chain is Extracellular. Residues 62 to 82 (WISSILLAMLYGTGPLCSVCV) traverse the membrane as a helical segment. The Cytoplasmic segment spans residues 83–84 (NR). Residues 85 to 105 (FGCRPVMLVGGLFASLGMVAA) form a helical membrane-spanning segment. The Extracellular segment spans residues 106 to 109 (SFCR). A helical transmembrane segment spans residues 110-130 (SIIQIYLTTGVITGLGLALNF). Residues 131 to 149 (QPSLIMLNRYFNKRRPIAN) are Cytoplasmic-facing. A helical membrane pass occupies residues 150–170 (GLAAAGSPVFLCALSPLGQLL). The Extracellular segment spans residues 171–179 (QDHYGWRGG). The chain crosses the membrane as a helical span at residues 180–200 (FLILGGLLLNCCVCAALMRPL). The Cytoplasmic segment spans residues 201-231 (VAPQVGGGTEPRGPQRPPQRLLDLSVFRDRG). The helical transmembrane segment at 232-252 (FLIYAVAASIMVLGLFVPPVF) threads the bilayer. Residues 253-267 (VVSYAKDMGVPDTKA) are Extracellular-facing. Residues 268-288 (AFLLTILGFIDIFARPTAGFI) form a helical membrane-spanning segment. The Cytoplasmic segment spans residues 289 to 298 (TGLKKVRPYS). The chain crosses the membrane as a helical span at residues 299 to 319 (VYLFSFAMFFNGFTDLTGSTA). The Extracellular segment spans residues 320–321 (TD). Residues 322–342 (YGGLVVFCIFFGISYGMVGAL) form a helical membrane-spanning segment. The Cytoplasmic segment spans residues 343–355 (QFEVLMAIVGTQK). Residues 356–376 (FSSAIGLVLLLEAVAVLIGPP) form a helical membrane-spanning segment. Over 377–391 (SGGKLLDATKVYKYV) the chain is Extracellular. Residues 392–412 (FILAGAEVLTSSLVLLLGNFF) traverse the membrane as a helical segment. Residues 413-470 (CIGKRKRPEVTEPEEVASEEKLHKPPVDVGVDSREVEHFLKAEPEKNGEVVHTPETSV) are Cytoplasmic-facing. Basolateral sorting signal stretches follow at residues 429 to 446 (ASEEKLHKPPVDVGVDSR) and 446 to 470 (REVEHFLKAEPEKNGEVVHTPETSV). Ser-430 is subject to Phosphoserine. A Phosphothreonine modification is found at Thr-465. Ser-469 is modified (phosphoserine).

The protein belongs to the major facilitator superfamily. Monocarboxylate porter (TC 2.A.1.13) family. As to quaternary structure, interacts with BSG; interaction mediates SLC16A3 targeting to the plasma membrane.

The protein localises to the cell membrane. Its subcellular location is the basolateral cell membrane. The catalysed reaction is (S)-lactate(in) + H(+)(in) = (S)-lactate(out) + H(+)(out). It carries out the reaction pyruvate(out) + H(+)(out) = pyruvate(in) + H(+)(in). Proton-dependent transporter of monocarboxylates such as L-lactate and pyruvate. Plays a predominant role in the L-lactate efflux from highly glycolytic cells. This Mus musculus (Mouse) protein is Monocarboxylate transporter 4 (Slc16a3).